A 153-amino-acid polypeptide reads, in one-letter code: Small ribosomal subunit protein uS13 (153 aa).

Residues 132 to 153 are disordered; sequence VRGQRTRSHHRKGRTVGVIKKK. The span at 135–153 shows a compositional bias: basic residues; the sequence is QRTRSHHRKGRTVGVIKKK.

It belongs to the universal ribosomal protein uS13 family. In terms of assembly, part of the 30S ribosomal subunit. Forms a loose heterodimer with protein S19. Forms two bridges to the 50S subunit in the 70S ribosome.

Its function is as follows. Located at the top of the head of the 30S subunit, it contacts several helices of the 16S rRNA. In the 70S ribosome it contacts the 23S rRNA (bridge B1a) and protein L5 of the 50S subunit (bridge B1b), connecting the 2 subunits; these bridges are implicated in subunit movement. This is Small ribosomal subunit protein uS13 from Nanoarchaeum equitans (strain Kin4-M).